A 217-amino-acid polypeptide reads, in one-letter code: Ribulose-phosphate 3-epimerase (217 aa).

Residue S6 coordinates substrate. The a divalent metal cation site is built by H29, D31, and H62. Residue D31 is the Proton acceptor of the active site. Substrate contacts are provided by residues H62, G138–G141, D171–G173, and G193–S194. D171 is an a divalent metal cation binding site. The active-site Proton donor is D171.

It belongs to the ribulose-phosphate 3-epimerase family. It depends on a divalent metal cation as a cofactor.

The catalysed reaction is D-ribulose 5-phosphate = D-xylulose 5-phosphate. It functions in the pathway carbohydrate degradation. Its function is as follows. Catalyzes the reversible epimerization of D-ribulose 5-phosphate to D-xylulose 5-phosphate. This chain is Ribulose-phosphate 3-epimerase, found in Helicobacter pylori (strain J99 / ATCC 700824) (Campylobacter pylori J99).